Here is a 776-residue protein sequence, read N- to C-terminus: Ankyrin repeat and EF-hand domain-containing protein 1 (776 aa).

4 ANK repeats span residues 47 to 76, 184 to 213, 217 to 246, and 250 to 279; these read NGLS…HPDV, TGRT…EVNA, DRHH…DVGL, and NGNT…DLKW. One can recognise an EF-hand domain in the interval 335-369; sequence EREAFLREAFAVLDRGDGSISKNDFVMVLEERQDY. ANK repeat units follow at residues 524–553, 557–586, 590–619, and 623–652; these read YYKT…NVNA, FLWT…LIDA, NNST…KFQL, and KGHS…NLPK.

This chain is Ankyrin repeat and EF-hand domain-containing protein 1 (ANKEF1), found in Homo sapiens (Human).